We begin with the raw amino-acid sequence, 523 residues long: 2-isopropylmalate synthase (523 aa).

A Pyruvate carboxyltransferase domain is found at valine 5–tryptophan 267. Residues aspartate 14, histidine 202, histidine 204, and asparagine 238 each contribute to the Mn(2+) site. A regulatory domain region spans residues arginine 392 to valine 523.

This sequence belongs to the alpha-IPM synthase/homocitrate synthase family. LeuA type 1 subfamily. In terms of assembly, homodimer. Requires Mn(2+) as cofactor.

The protein resides in the cytoplasm. The enzyme catalyses 3-methyl-2-oxobutanoate + acetyl-CoA + H2O = (2S)-2-isopropylmalate + CoA + H(+). Its pathway is amino-acid biosynthesis; L-leucine biosynthesis; L-leucine from 3-methyl-2-oxobutanoate: step 1/4. In terms of biological role, catalyzes the condensation of the acetyl group of acetyl-CoA with 3-methyl-2-oxobutanoate (2-ketoisovalerate) to form 3-carboxy-3-hydroxy-4-methylpentanoate (2-isopropylmalate). The chain is 2-isopropylmalate synthase from Enterobacter sp. (strain 638).